The sequence spans 99 residues: NADH-quinone oxidoreductase subunit K 1 (99 aa).

3 helical membrane passes run 3–23, 28–48, and 59–79; these read PVNYLYLAALLFAIGASGVLV, IVVFMCVELMLNACNLALVTF, and IVAFFTMVVAAAEVVVGLAII.

This sequence belongs to the complex I subunit 4L family. In terms of assembly, NDH-1 is composed of 14 different subunits. Subunits NuoA, H, J, K, L, M, N constitute the membrane sector of the complex.

It is found in the cell membrane. It carries out the reaction a quinone + NADH + 5 H(+)(in) = a quinol + NAD(+) + 4 H(+)(out). Its function is as follows. NDH-1 shuttles electrons from NADH, via FMN and iron-sulfur (Fe-S) centers, to quinones in the respiratory chain. The immediate electron acceptor for the enzyme in this species is believed to be a menaquinone. Couples the redox reaction to proton translocation (for every two electrons transferred, four hydrogen ions are translocated across the cytoplasmic membrane), and thus conserves the redox energy in a proton gradient. The sequence is that of NADH-quinone oxidoreductase subunit K 1 from Streptomyces griseus subsp. griseus (strain JCM 4626 / CBS 651.72 / NBRC 13350 / KCC S-0626 / ISP 5235).